Consider the following 260-residue polypeptide: Proliferating cell nuclear antigen (260 aa).

Residues 61 to 80 (RCDRNLSMGMNLGSMAKILK) mediate DNA binding.

This sequence belongs to the PCNA family. As to quaternary structure, homotrimer. Forms a complex with activator 1 heteropentamer in the presence of ATP. Interacts with E2f. Interacts with the catalytic subunits of two DNA polymerase complexes: PolD1 from the delta complex and PolE1/DNApol-epsilon255 from the epsilon complex. In terms of tissue distribution, expressed at high levels in adult ovary.

It is found in the nucleus. The protein resides in the chromosome. Its subcellular location is the cytoplasm. In terms of biological role, likely to be an auxiliary protein of DNA polymerase delta complex and is probably involved in the control of DNA replication and repair by increasing the polymerase's processibility. This Drosophila melanogaster (Fruit fly) protein is Proliferating cell nuclear antigen.